Here is a 353-residue protein sequence, read N- to C-terminus: MMSTLSYTLGQLAAHVGAELRGDADLPIQGLATLQEAGPAQLSFLANPQYRKYLPESRAGAVLLTAADADGFSGTALVVANPYLAYASLSHLFDRKPKAAAGIHPTAIVAADAEVDPSASVGAYAVIESGARIGAGVSIGAHCVIGARSVIGEGGWLAPRVTLYHDVTIGARVSIQSGAVIGGEGFGFANEKGVWQKIAQIGGVTIGDDVEIGANTTIDRGALSDTLIGNGVKLDNQIMIAHNVQIGDHTAMAACVGISGSAKIGRHCMLAGGVGLVGHIEICDNVFVTGMTMVTRSITEPGSYSSGTAMQPAAEWKKSAARIRQLDDMARRLQQLEKRLAAVTSSGDASSDA.

Catalysis depends on His-242, which acts as the Proton acceptor.

The protein belongs to the transferase hexapeptide repeat family. LpxD subfamily. Homotrimer.

It carries out the reaction a UDP-3-O-[(3R)-3-hydroxyacyl]-alpha-D-glucosamine + a (3R)-hydroxyacyl-[ACP] = a UDP-2-N,3-O-bis[(3R)-3-hydroxyacyl]-alpha-D-glucosamine + holo-[ACP] + H(+). The protein operates within bacterial outer membrane biogenesis; LPS lipid A biosynthesis. Catalyzes the N-acylation of UDP-3-O-acylglucosamine using 3-hydroxyacyl-ACP as the acyl donor. Is involved in the biosynthesis of lipid A, a phosphorylated glycolipid that anchors the lipopolysaccharide to the outer membrane of the cell. The chain is UDP-3-O-acylglucosamine N-acyltransferase from Pseudomonas aeruginosa (strain UCBPP-PA14).